Reading from the N-terminus, the 868-residue chain is Probable mixed-linked glucan synthase 3 (868 aa).

Residues 36-68 are disordered; the sequence is ERKAAGGGGGGAKGKHWAAADKGERRAAKECGG. A compositionally biased stretch (basic and acidic residues) spans 53–68; sequence AAADKGERRAAKECGG. 2 helical membrane passes run 86-106 and 116-136; these read LLHP…LFFG and IMWF…SWLL. Residue D211 is part of the active site. Substrate-binding residues include D412 and D414. D573 is a catalytic residue. A run of 6 helical transmembrane segments spans residues 649–669, 686–706, 717–737, 771–791, 809–829, and 837–857; these read IYPV…MWLI, LLMI…WAGI, FFMI…VVNL, MLIP…VAIG, IMGL…ALAI, and PIIL…VYVA.

This sequence belongs to the glycosyltransferase 2 family. Plant cellulose synthase-like F subfamily.

It is found in the golgi apparatus membrane. Functionally, may catalyze both beta-1,3 and beta-1,4 glycosidic linkage on beta-D-glucan. Essential for (1,3;1,4)-beta-D-glucans synthesis in grasses and cereals (Poaceae). The mixed-linked glucans (which are not present in walls of dicotyledons or most other monocotyledonous plants) are particularly important constituents of the walls of the starchy endosperm and aleurone cells of cereal grains such as oats, wheat, rice and barley. They can account for up to 70% by weight of the wall. This Oryza sativa subsp. indica (Rice) protein is Probable mixed-linked glucan synthase 3 (CSLF3).